The primary structure comprises 90 residues: DNA-directed RNA polymerase subunit omega (90 aa).

Positions 69 to 90 (RQEQQEQDAAELAAVSSITHNR) are disordered.

Belongs to the RNA polymerase subunit omega family. In terms of assembly, the RNAP catalytic core consists of 2 alpha, 1 beta, 1 beta' and 1 omega subunit. When a sigma factor is associated with the core the holoenzyme is formed, which can initiate transcription.

The enzyme catalyses RNA(n) + a ribonucleoside 5'-triphosphate = RNA(n+1) + diphosphate. Its function is as follows. Promotes RNA polymerase assembly. Latches the N- and C-terminal regions of the beta' subunit thereby facilitating its interaction with the beta and alpha subunits. The sequence is that of DNA-directed RNA polymerase subunit omega from Aliivibrio fischeri (strain ATCC 700601 / ES114) (Vibrio fischeri).